We begin with the raw amino-acid sequence, 346 residues long: Cell division protein ZipA (346 aa).

The Periplasmic portion of the chain corresponds to 1–6 (MEDLQL). The chain crosses the membrane as a helical span at residues 7-27 (VLFVLGAIAIVAVLVHGFWSI). The Cytoplasmic segment spans residues 28 to 346 (RRQQPKSLKD…DYLHRIRANA (319 aa)). Residues 116-146 (EPSMAQPDFSLQSPTAKEQHRGPKASRQEPV) are disordered.

This sequence belongs to the ZipA family. As to quaternary structure, interacts with FtsZ via their C-terminal domains.

It is found in the cell inner membrane. Functionally, essential cell division protein that stabilizes the FtsZ protofilaments by cross-linking them and that serves as a cytoplasmic membrane anchor for the Z ring. Also required for the recruitment to the septal ring of downstream cell division proteins. This Shewanella sp. (strain ANA-3) protein is Cell division protein ZipA.